A 104-amino-acid polypeptide reads, in one-letter code: Acetylcholine receptor subunit alpha (104 aa).

Residues 1-104 (NPPAIFKSYC…YFIVNVIIPC (104 aa)) lie on the Extracellular side of the membrane. 2 disulfide bridges follow: Cys-10–Cys-24 and Cys-74–Cys-75. Asn-23 carries N-linked (GlcNAc...) asparagine glycosylation.

Belongs to the ligand-gated ion channel (TC 1.A.9) family. Acetylcholine receptor (TC 1.A.9.1) subfamily. Alpha-1/CHRNA1 sub-subfamily. As to quaternary structure, one of the alpha chains that assemble within the acetylcholine receptor, a pentamer of two alpha chains, a beta, a delta, and a gamma or epsilon chains.

It is found in the postsynaptic cell membrane. Its subcellular location is the cell membrane. It catalyses the reaction K(+)(in) = K(+)(out). The catalysed reaction is Na(+)(in) = Na(+)(out). In terms of biological role, upon acetylcholine binding, the AChR responds by an extensive change in conformation that affects all subunits and leads to opening of an ion-conducting channel across the plasma membrane. The sequence is that of Acetylcholine receptor subunit alpha (CHRNA1) from Naja naja (Indian cobra).